We begin with the raw amino-acid sequence, 480 residues long: UDP-N-acetylmuramate--L-alanine ligase (480 aa).

129–135 (GSHGKTT) serves as a coordination point for ATP.

This sequence belongs to the MurCDEF family.

The protein localises to the cytoplasm. It catalyses the reaction UDP-N-acetyl-alpha-D-muramate + L-alanine + ATP = UDP-N-acetyl-alpha-D-muramoyl-L-alanine + ADP + phosphate + H(+). The protein operates within cell wall biogenesis; peptidoglycan biosynthesis. In terms of biological role, cell wall formation. The sequence is that of UDP-N-acetylmuramate--L-alanine ligase from Syntrophus aciditrophicus (strain SB).